The sequence spans 1120 residues: TBC1 domain family member 8B (1120 aa).

GRAM domains follow at residues 145 to 212 (LKFE…EKTS) and 285 to 353 (EQFN…DKTN). Positions 487–674 (GIPETLRGEL…NVVDCFFYDG (188 aa)) constitute a Rab-GAP TBC domain. An EF-hand domain is found at 858–893 (NKDSLALWTFRLLDENSDCLINFKEFSSAIDIMYNG). Residues 1035 to 1066 (SPTSSAKGFSGTVCGSGGPSEEKTGSHLEKDP) form a disordered region. A compositionally biased stretch (basic and acidic residues) spans 1054–1066 (SEEKTGSHLEKDP).

As to quaternary structure, interacts (via domain Rab-GAP TBC) with RAB11B (in GTP-bound form). In terms of tissue distribution, kidney (at protein level).

It is found in the cytoplasm. It localises to the cytosol. Functionally, involved in vesicular recycling, probably as a RAB11B GTPase-activating protein. The chain is TBC1 domain family member 8B (TBC1D8B) from Homo sapiens (Human).